We begin with the raw amino-acid sequence, 130 residues long: RutC family protein slr0709 (130 aa).

It belongs to the RutC family.

In Synechocystis sp. (strain ATCC 27184 / PCC 6803 / Kazusa), this protein is RutC family protein slr0709.